The chain runs to 414 residues: Dihydroorotase (414 aa).

2 residues coordinate Zn(2+): His56 and His58. Substrate is bound by residues 58 to 60 and Asn90; that span reads HFR. Zn(2+) is bound by residues Lys138, His171, His219, and Asp280. Lys138 is modified (N6-carboxylysine). The active site involves Asp280. Position 284 (His284) interacts with substrate.

It belongs to the metallo-dependent hydrolases superfamily. DHOase family. Class I DHOase subfamily. Zn(2+) is required as a cofactor.

It carries out the reaction (S)-dihydroorotate + H2O = N-carbamoyl-L-aspartate + H(+). It functions in the pathway pyrimidine metabolism; UMP biosynthesis via de novo pathway; (S)-dihydroorotate from bicarbonate: step 3/3. In terms of biological role, catalyzes the reversible cyclization of carbamoyl aspartate to dihydroorotate. This Thermoplasma acidophilum (strain ATCC 25905 / DSM 1728 / JCM 9062 / NBRC 15155 / AMRC-C165) protein is Dihydroorotase.